Consider the following 165-residue polypeptide: Ribosome maturation factor RimM (165 aa).

Residues 94 to 165 (EDEFYIADLT…YVILNYQREA (72 aa)) form the PRC barrel domain.

This sequence belongs to the RimM family. Binds ribosomal protein uS19.

It is found in the cytoplasm. An accessory protein needed during the final step in the assembly of 30S ribosomal subunit, possibly for assembly of the head region. Essential for efficient processing of 16S rRNA. May be needed both before and after RbfA during the maturation of 16S rRNA. It has affinity for free ribosomal 30S subunits but not for 70S ribosomes. In Rickettsia rickettsii (strain Sheila Smith), this protein is Ribosome maturation factor RimM.